The primary structure comprises 314 residues: MNKLKLIFAGTPDFAARHLAALLSSDHEVVAVYTQPDKPAGRGQKLTASPVKELALTHNLPVYQPASLRKEEAQAELASLGADLMVVVAYGLILPKVVLDTPRLGCINVHGSLLPRWRGAAPIQRSIWAGDTETGVTIMQMDVGLDTGAMIRKVTCPIAANETSTSLYDKLAELGPQALVDTINAMAAGETAAEEQDDALANYAEKLSKEEARIDWSMEAVAIDRCIRAFNPWPISWFEVAGQTIKVWQAEVINSDHGQPTGTLLKADKQGIDIATGLGVLRLLTLQPPGKKAMSVSDLLNSRRDWFEPGTQLN.

112–115 (SLLP) provides a ligand contact to (6S)-5,6,7,8-tetrahydrofolate.

The protein belongs to the Fmt family.

It carries out the reaction L-methionyl-tRNA(fMet) + (6R)-10-formyltetrahydrofolate = N-formyl-L-methionyl-tRNA(fMet) + (6S)-5,6,7,8-tetrahydrofolate + H(+). In terms of biological role, attaches a formyl group to the free amino group of methionyl-tRNA(fMet). The formyl group appears to play a dual role in the initiator identity of N-formylmethionyl-tRNA by promoting its recognition by IF2 and preventing the misappropriation of this tRNA by the elongation apparatus. This chain is Methionyl-tRNA formyltransferase, found in Aeromonas salmonicida (strain A449).